An 897-amino-acid polypeptide reads, in one-letter code: Isoleucine--tRNA ligase (897 aa).

The 'HIGH' region signature appears at 59 to 69 (PYANGDIHVGH). Residue Glu-552 participates in L-isoleucyl-5'-AMP binding. Residues 593–597 (KMSKS) carry the 'KMSKS' region motif. Lys-596 is a binding site for ATP. Residues Cys-872, Cys-875, Cys-890, and Cys-893 each contribute to the Zn(2+) site.

The protein belongs to the class-I aminoacyl-tRNA synthetase family. IleS type 1 subfamily. As to quaternary structure, monomer. Requires Zn(2+) as cofactor.

The protein localises to the cytoplasm. It catalyses the reaction tRNA(Ile) + L-isoleucine + ATP = L-isoleucyl-tRNA(Ile) + AMP + diphosphate. Its function is as follows. Catalyzes the attachment of isoleucine to tRNA(Ile). As IleRS can inadvertently accommodate and process structurally similar amino acids such as valine, to avoid such errors it has two additional distinct tRNA(Ile)-dependent editing activities. One activity is designated as 'pretransfer' editing and involves the hydrolysis of activated Val-AMP. The other activity is designated 'posttransfer' editing and involves deacylation of mischarged Val-tRNA(Ile). In Mycoplasmoides gallisepticum (strain R(low / passage 15 / clone 2)) (Mycoplasma gallisepticum), this protein is Isoleucine--tRNA ligase.